A 476-amino-acid polypeptide reads, in one-letter code: 3-isopropylmalate dehydratase large subunit (476 aa).

3 residues coordinate [4Fe-4S] cluster: Cys-353, Cys-413, and Cys-416.

The protein belongs to the aconitase/IPM isomerase family. LeuC type 1 subfamily. Heterodimer of LeuC and LeuD. [4Fe-4S] cluster serves as cofactor.

It carries out the reaction (2R,3S)-3-isopropylmalate = (2S)-2-isopropylmalate. It functions in the pathway amino-acid biosynthesis; L-leucine biosynthesis; L-leucine from 3-methyl-2-oxobutanoate: step 2/4. Its function is as follows. Catalyzes the isomerization between 2-isopropylmalate and 3-isopropylmalate, via the formation of 2-isopropylmaleate. In Yersinia pseudotuberculosis serotype O:1b (strain IP 31758), this protein is 3-isopropylmalate dehydratase large subunit.